Here is a 390-residue protein sequence, read N- to C-terminus: MSGLHKQFLKKIKEQERAFGLSSLSEDPDESESNSNYFSPTPQPPNELRTDINEERHGHIRETYNDTKRDVFPIADIYTDPRSGVRFQTYFKPPSSSNAPIFICHHGAGSSSMTFCKLAQSLDNEYGKNNEYPGLFTYDMRGHGDSSTTIPPDYSLATITNDCEFIIDEFHAKHALRSSIYLLGHSLGGSVLTSYLVANPDNAYKFKGLIVLDIVEETAIKALSAMPQFVRKRPTTFGDYQEAIDWHIKESHLLHSEESALVSVPDLLRECPNGLIWKTNLQETEPFWETWFTGLSENFINCGKTQHIAKLLVLSGHETLDTNLIIGQMQGKYQLIVFNNTQNTGHFIQEDIPTQISISLVDFVRRNDSPNEYMKKEFGFVPKWGGKIHD.

The segment at 19–50 (FGLSSLSEDPDESESNSNYFSPTPQPPNELRT) is disordered. Residues 100–332 (PIFICHHGAG…NLIIGQMQGK (233 aa)) form the AB hydrolase-1 domain. Active-site residues include serine 186, aspartate 213, and histidine 346.

This sequence belongs to the AB hydrolase superfamily.

It catalyses the reaction [phosphatase 2A protein]-C-terminal L-leucine methyl ester + H2O = [phosphatase 2A protein]-C-terminal L-leucine + methanol + H(+). Its function is as follows. Demethylates proteins that have been reversibly carboxymethylated. Demethylates the phosphatase PP2A catalytic subunit. This chain is Protein phosphatase methylesterase 1 (PPE1), found in Debaryomyces hansenii (strain ATCC 36239 / CBS 767 / BCRC 21394 / JCM 1990 / NBRC 0083 / IGC 2968) (Yeast).